Reading from the N-terminus, the 462-residue chain is Kinetochore protein nsk1 (462 aa).

Positions 104 to 120 are enriched in polar residues; the sequence is PSKNHETSLSPSKSTID. 3 disordered regions span residues 104-161, 180-240, and 320-462; these read PSKN…CPGI, EKYG…PLRT, and NQLF…NIQS. The segment covering 121-138 has biased composition (basic and acidic residues); that stretch reads NNERKLDNEIDNYKHDVK. Polar residues predominate over residues 146–156; sequence GKTSNPSQGTT. Over residues 180–189 the composition is skewed to basic and acidic residues; sequence EKYGKTDLGK. A compositionally biased stretch (polar residues) spans 229 to 240; that stretch reads KNRSSTFSPLRT. The span at 324-333 shows a compositional bias: basic and acidic residues; sequence KSEEEKDPVG. Residues 422–444 show a composition bias toward polar residues; that stretch reads WPQNLAKNNINSEPNTPTKSNID. Residues 449–462 are compositionally biased toward basic residues; it reads HSARAHKTRKNIQS.

In terms of assembly, interacts with dlc1. The dlc1-nsk1 complex seems to oligomerize in chain-like structures. Also binds directly to spindle microtubules. Post-translationally, phosphorylated by cdk1 at prometaphase arrest. Phosphorylation prevents nsk1 kinetochore and spindle targeting. Dephosphorylated by clp1 at anaphase onset controls its relocalization.

The protein localises to the nucleus. The protein resides in the nucleolus. Its subcellular location is the cytoplasm. It is found in the cytoskeleton. It localises to the spindle. The protein localises to the chromosome. The protein resides in the centromere. Its subcellular location is the kinetochore. In terms of biological role, ensures chromosome alignment and accurate chromosome segregation during mitosis. Promotes proper kinetochore-microtubule (k-MT) interactions during anaphase B. The phosphorylation status of nsk1 affects the proper k-MT coupling, ensuring that it interacts stably only at the correct time during mitosis. In Schizosaccharomyces pombe (strain 972 / ATCC 24843) (Fission yeast), this protein is Kinetochore protein nsk1 (nsk1).